Here is a 265-residue protein sequence, read N- to C-terminus: Keratinocyte-associated transmembrane protein 2 (265 aa).

Residues Met1–Ser49 form the signal peptide. Over Arg50–Asp196 the chain is Extracellular. The segment covering Thr72–Lys96 has biased composition (polar residues). Disordered stretches follow at residues Thr72–Ser123 and Ser135–Thr168. Residue Asn75 is glycosylated (N-linked (GlcNAc...) asparagine). A compositionally biased stretch (acidic residues) spans Glu114–Ser123. The helical transmembrane segment at Ser197–Tyr217 threads the bilayer. Topologically, residues His218 to Phe265 are cytoplasmic. Phosphoserine occurs at positions 229 and 256.

The protein resides in the membrane. This Pongo abelii (Sumatran orangutan) protein is Keratinocyte-associated transmembrane protein 2 (KCT2).